A 156-amino-acid chain; its full sequence is Cyanate hydratase (156 aa).

Active-site residues include Arg-96, Glu-99, and Ser-122.

The protein belongs to the cyanase family.

The enzyme catalyses cyanate + hydrogencarbonate + 3 H(+) = NH4(+) + 2 CO2. Catalyzes the reaction of cyanate with bicarbonate to produce ammonia and carbon dioxide. The sequence is that of Cyanate hydratase from Escherichia coli O7:K1 (strain IAI39 / ExPEC).